The sequence spans 238 residues: Flagellar L-ring protein (238 aa).

Residues 1 to 23 form the signal peptide; the sequence is MVKLFSYKIKYYLTAFFIIIIQS. Cysteine 24 is lipidated: N-palmitoyl cysteine. The S-diacylglycerol cysteine moiety is linked to residue cysteine 24.

The protein belongs to the FlgH family. In terms of assembly, the basal body constitutes a major portion of the flagellar organelle and consists of four rings (L,P,S, and M) mounted on a central rod.

The protein resides in the cell outer membrane. Its subcellular location is the bacterial flagellum basal body. Its function is as follows. Assembles around the rod to form the L-ring and probably protects the motor/basal body from shearing forces during rotation. The protein is Flagellar L-ring protein of Buchnera aphidicola subsp. Schizaphis graminum (strain Sg).